Reading from the N-terminus, the 61-residue chain is Small ribosomal subunit protein uS14 (61 aa).

Zn(2+)-binding residues include cysteine 24, cysteine 27, cysteine 40, and cysteine 43.

The protein belongs to the universal ribosomal protein uS14 family. Zinc-binding uS14 subfamily. As to quaternary structure, part of the 30S ribosomal subunit. Contacts proteins S3 and S10. Zn(2+) is required as a cofactor.

Its function is as follows. Binds 16S rRNA, required for the assembly of 30S particles and may also be responsible for determining the conformation of the 16S rRNA at the A site. The polypeptide is Small ribosomal subunit protein uS14 (Lachnospira eligens (strain ATCC 27750 / DSM 3376 / VPI C15-48 / C15-B4) (Eubacterium eligens)).